A 373-amino-acid polypeptide reads, in one-letter code: Chaperone protein DnaJ (373 aa).

The region spanning 5–70 (DYYEVLGLQK…EKKSNYDQFG (66 aa)) is the J domain. The CR-type zinc-finger motif lies at 132–214 (GVEKEITVNR…CRGNGNVRKT (83 aa)). Zn(2+) contacts are provided by Cys-145, Cys-148, Cys-162, Cys-165, Cys-188, Cys-191, Cys-202, and Cys-205. 4 CXXCXGXG motif repeats span residues 145–152 (CEHCNGSG), 162–169 (CPTCSGTG), 188–195 (CDRCSGTG), and 202–209 (CTHCRGNG).

Belongs to the DnaJ family. In terms of assembly, homodimer. Zn(2+) serves as cofactor.

The protein resides in the cytoplasm. Its function is as follows. Participates actively in the response to hyperosmotic and heat shock by preventing the aggregation of stress-denatured proteins and by disaggregating proteins, also in an autonomous, DnaK-independent fashion. Unfolded proteins bind initially to DnaJ; upon interaction with the DnaJ-bound protein, DnaK hydrolyzes its bound ATP, resulting in the formation of a stable complex. GrpE releases ADP from DnaK; ATP binding to DnaK triggers the release of the substrate protein, thus completing the reaction cycle. Several rounds of ATP-dependent interactions between DnaJ, DnaK and GrpE are required for fully efficient folding. Also involved, together with DnaK and GrpE, in the DNA replication of plasmids through activation of initiation proteins. The polypeptide is Chaperone protein DnaJ (Clostridium botulinum (strain Eklund 17B / Type B)).